Here is a 106-residue protein sequence, read N- to C-terminus: MSKDNTINIEREKQLDTVKQKLAPPPMYKVLLNNDDYTPMDFVIEVLVRFFNLDSEKAHQIMLTVHYRGRAVCGVYTAEIAETKVMQVTQYAKKHQHPLMCTMEQV.

Belongs to the ClpS family. As to quaternary structure, binds to the N-terminal domain of the chaperone ClpA.

Functionally, involved in the modulation of the specificity of the ClpAP-mediated ATP-dependent protein degradation. This is ATP-dependent Clp protease adapter protein ClpS from Pseudoalteromonas atlantica (strain T6c / ATCC BAA-1087).